The sequence spans 521 residues: Bifunctional purine biosynthesis protein PurH (521 aa).

Residues 1 to 145 form the MGS-like domain; that stretch reads MIKQALISVS…KNHRDVTVVV (145 aa).

The protein belongs to the PurH family.

The enzyme catalyses (6R)-10-formyltetrahydrofolate + 5-amino-1-(5-phospho-beta-D-ribosyl)imidazole-4-carboxamide = 5-formamido-1-(5-phospho-D-ribosyl)imidazole-4-carboxamide + (6S)-5,6,7,8-tetrahydrofolate. It carries out the reaction IMP + H2O = 5-formamido-1-(5-phospho-D-ribosyl)imidazole-4-carboxamide. It participates in purine metabolism; IMP biosynthesis via de novo pathway; 5-formamido-1-(5-phospho-D-ribosyl)imidazole-4-carboxamide from 5-amino-1-(5-phospho-D-ribosyl)imidazole-4-carboxamide (10-formyl THF route): step 1/1. The protein operates within purine metabolism; IMP biosynthesis via de novo pathway; IMP from 5-formamido-1-(5-phospho-D-ribosyl)imidazole-4-carboxamide: step 1/1. The protein is Bifunctional purine biosynthesis protein PurH of Burkholderia ambifaria (strain MC40-6).